Consider the following 439-residue polypeptide: Hemagglutinin-esterase (439 aa).

The N-terminal stretch at 1–22 (MGSMCIAMAPRTLLLLIGCQLA) is a signal peptide. Residues 12–132 (TLLLLIGCQL…DNKRWMGNKA (121 aa)) are esterase domain 1. The Virion surface portion of the chain corresponds to 23–407 (LGFNEPLNVV…PVCLYDPLPV (385 aa)). Ser45 serves as the catalytic Nucleophile. Cys49 and Cys70 are joined by a disulfide. Asn94, Asn152, Asn196, Asn246, and Asn316 each carry an N-linked (GlcNAc...) asparagine; by host glycan. A disulfide bond links Cys118 and Cys167. Residues 133–281 (RFYALVYKKM…GNYKAVSLEY (149 aa)) are receptor binding. 2 disulfides stabilise this stretch: Cys202–Cys291 and Cys210–Cys264. The interval 282–395 (LLTIPSKAIC…QCPTAANIEF (114 aa)) is esterase domain 2. Cys322 and Cys327 form a disulfide bridge. Residues Asn331 and Asn337 are each glycosylated (N-linked (GlcNAc...) asparagine; by host). Catalysis depends on charge relay system residues Asp342 and His345. N-linked (GlcNAc...) asparagine; by host glycans are attached at residues Asn360 and Asn374. A disulfide bridge links Cys363 with Cys387. A helical transmembrane segment spans residues 408-428 (ILLGVLLGIAVLIIVFLLFYF). Topologically, residues 429–439 (MTDSGVRLHEA) are intravirion.

This sequence belongs to the influenza type C/coronaviruses hemagglutinin-esterase family. Homodimer; disulfide-linked. Forms a complex with the M protein in the pre-Golgi. Associates then with S-M complex to form a ternary complex S-M-HE. In terms of processing, N-glycosylated in the host RER.

It localises to the virion membrane. Its subcellular location is the host cell membrane. It carries out the reaction N-acetyl-9-O-acetylneuraminate + H2O = N-acetylneuraminate + acetate + H(+). The enzyme catalyses N-acetyl-4-O-acetylneuraminate + H2O = N-acetylneuraminate + acetate + H(+). Its function is as follows. Structural protein that makes short spikes at the surface of the virus. Contains receptor binding and receptor-destroying activities. Mediates de-O-acetylation of N-acetyl-4-O-acetylneuraminic acid, which is probably the receptor determinant recognized by the virus on the surface of erythrocytes and susceptible cells. This receptor-destroying activity is important for virus release as it probably helps preventing self-aggregation and ensures the efficient spread of the progeny virus from cell to cell. May serve as a secondary viral attachment protein for initiating infection, the spike protein being the major one. May become a target for both the humoral and the cellular branches of the immune system. In Puffinosis coronavirus (PV), this protein is Hemagglutinin-esterase.